Here is a 416-residue protein sequence, read N- to C-terminus: Elongation factor 1-gamma 3 (416 aa).

The 82-residue stretch at 1 to 82 folds into the GST N-terminal domain; it reads MALVLHCGSG…YVARLKDNSS (82 aa). The GST C-terminal domain occupies 87-215; it reads SLIDYSHIEQ…FKQAESVPPV (129 aa). The disordered stretch occupies residues 213 to 263; the sequence is PPVQKKAAPPKESKAKEAKKEAPKEAPKPKVEASEEEEAPKPKPKNPLDLL. The span at 221–245 shows a compositional bias: basic and acidic residues; the sequence is PPKESKAKEAKKEAPKEAPKPKVEA. Residues 256-416 form the EF-1-gamma C-terminal domain; sequence PKNPLDLLPP…EDLLDAKCFK (161 aa).

EF-1 is composed of four subunits: alpha, beta, delta, and gamma.

Functionally, probably plays a role in anchoring the complex to other cellular components. The protein is Elongation factor 1-gamma 3 of Oryza sativa subsp. japonica (Rice).